A 387-amino-acid chain; its full sequence is 1-deoxy-D-xylulose 5-phosphate reductoisomerase (387 aa).

Residues Thr10, Gly11, Ser12, Ile13, Gly36, Arg37, and Asn124 each contribute to the NADPH site. Lys125 serves as a coordination point for 1-deoxy-D-xylulose 5-phosphate. NADPH is bound at residue Glu126. Asp150 is a Mn(2+) binding site. The 1-deoxy-D-xylulose 5-phosphate site is built by Ser151, Glu152, Ser176, and His199. Glu152 is a binding site for Mn(2+). Gly205 contributes to the NADPH binding site. Positions 212, 217, 218, and 221 each coordinate 1-deoxy-D-xylulose 5-phosphate. Position 221 (Glu221) interacts with Mn(2+).

This sequence belongs to the DXR family. The cofactor is Mg(2+). Mn(2+) serves as cofactor.

The enzyme catalyses 2-C-methyl-D-erythritol 4-phosphate + NADP(+) = 1-deoxy-D-xylulose 5-phosphate + NADPH + H(+). Its pathway is isoprenoid biosynthesis; isopentenyl diphosphate biosynthesis via DXP pathway; isopentenyl diphosphate from 1-deoxy-D-xylulose 5-phosphate: step 1/6. Catalyzes the NADPH-dependent rearrangement and reduction of 1-deoxy-D-xylulose-5-phosphate (DXP) to 2-C-methyl-D-erythritol 4-phosphate (MEP). This chain is 1-deoxy-D-xylulose 5-phosphate reductoisomerase, found in Cyanothece sp. (strain PCC 7425 / ATCC 29141).